Here is a 176-residue protein sequence, read N- to C-terminus: MILIIYAHPYPHHSHANKQMLEQAGTLENVEIRSLYHLYPDFNIDVAAEQEALSRASLIVWQHPMQWYSVPPLLKLWMDKVLTHGWAYGHGGTALHGKHLLWAVTTGGGENHFTIGSHPGFDVLSQPLQATALYCGLKWLPPFSMHCTFICDDDTLQAQARQYKQRLLAWQEVNHG.

Residues His8, 14-17 (SHAN), 65-68 (MQWY), and 105-108 (TTGG) contribute to the FMN site.

The protein belongs to the NAD(P)H dehydrogenase (quinone) family. KefF subfamily. In terms of assembly, homodimer. Interacts with KefC. FMN serves as cofactor.

The protein resides in the cell inner membrane. The enzyme catalyses a quinone + NADH + H(+) = a quinol + NAD(+). It catalyses the reaction a quinone + NADPH + H(+) = a quinol + NADP(+). In terms of biological role, regulatory subunit of a potassium efflux system that confers protection against electrophiles. Required for full activity of KefC. Shows redox enzymatic activity, but this enzymatic activity is not required for activation of KefC. This Salmonella dublin (strain CT_02021853) protein is Glutathione-regulated potassium-efflux system ancillary protein KefF.